The sequence spans 346 residues: Heat-inducible transcription repressor HrcA (346 aa).

Belongs to the HrcA family.

Its function is as follows. Negative regulator of class I heat shock genes (grpE-dnaK-dnaJ and groELS operons). Prevents heat-shock induction of these operons. This is Heat-inducible transcription repressor HrcA from Pediococcus pentosaceus (strain ATCC 25745 / CCUG 21536 / LMG 10740 / 183-1w).